The following is a 221-amino-acid chain: MTKTADLKGSNFTLSVLHLPNDDVALALSMLEQKVAQAPSFFASAPVVVNIENVSNEINFVELKSGVERTGMIPVGITGCKDKQKQAQATAAGFAVMTSFTPQQVTQKANMQPTKVVKTPIRSGQQIYAKDADLVILNHVSPGAEVIADGSIHIHGTLRGRAIAGASGQAEAKVFCKNLQAELISIAGNYWLSDQIDKEYWHQNVMITMVEDRIQIDTLTL.

It belongs to the MinC family. Interacts with MinD and FtsZ.

Its function is as follows. Cell division inhibitor that blocks the formation of polar Z ring septums. Rapidly oscillates between the poles of the cell to destabilize FtsZ filaments that have formed before they mature into polar Z rings. Prevents FtsZ polymerization. The chain is Probable septum site-determining protein MinC from Aliivibrio fischeri (strain ATCC 700601 / ES114) (Vibrio fischeri).